We begin with the raw amino-acid sequence, 192 residues long: NADH-quinone oxidoreductase subunit C (192 aa).

Residues 170 to 192 form a disordered region; that stretch reads LGGIPVEYKGATVPPPDERRQYA.

It belongs to the complex I 30 kDa subunit family. As to quaternary structure, NDH-1 is composed of 14 different subunits. Subunits NuoB, C, D, E, F, and G constitute the peripheral sector of the complex.

It is found in the cell membrane. The catalysed reaction is a quinone + NADH + 5 H(+)(in) = a quinol + NAD(+) + 4 H(+)(out). Functionally, NDH-1 shuttles electrons from NADH, via FMN and iron-sulfur (Fe-S) centers, to quinones in the respiratory chain. The immediate electron acceptor for the enzyme in this species is believed to be a menaquinone. Couples the redox reaction to proton translocation (for every two electrons transferred, four hydrogen ions are translocated across the cytoplasmic membrane), and thus conserves the redox energy in a proton gradient. The protein is NADH-quinone oxidoreductase subunit C of Acidothermus cellulolyticus (strain ATCC 43068 / DSM 8971 / 11B).